Consider the following 467-residue polypeptide: Serine/threonine-protein phosphatase 2A 56 kDa regulatory subunit epsilon isoform (467 aa).

Positions Met-1–Gly-40 are disordered. An N-acetylserine modification is found at Ser-2. A Phosphothreonine modification is found at Thr-7. The span at Lys-20–Arg-29 shows a compositional bias: basic residues. 3 positions are modified to phosphoserine: Ser-30, Ser-32, and Ser-34. Positions Ser-30 to Gly-40 are enriched in low complexity.

It belongs to the phosphatase 2A regulatory subunit B56 family. Found in a complex with at least ARL2, PPP2CB; PPP2R1A, PPP2R2A, PPP2R5E and TBCD. PP2A consists of a common heterodimeric core enzyme, composed of a 36 kDa catalytic subunit (subunit C) and a 65 kDa constant regulatory subunit (PR65 or subunit A), that associates with a variety of regulatory subunits. Proteins that associate with the core dimer include three families of regulatory subunits B (the R2/B/PR55/B55, R3/B''/PR72/PR130/PR59 and R5/B'/B56 families), the 48 kDa variable regulatory subunit, viral proteins, and cell signaling molecules. Interacts with SGO1. Post-translationally, phosphorylated on serine residues.

It is found in the cytoplasm. Functionally, the B regulatory subunit might modulate substrate selectivity and catalytic activity, and might also direct the localization of the catalytic enzyme to a particular subcellular compartment. This chain is Serine/threonine-protein phosphatase 2A 56 kDa regulatory subunit epsilon isoform (PPP2R5E), found in Homo sapiens (Human).